The following is a 417-amino-acid chain: Carbohydrate sulfotransferase 8 (417 aa).

The Cytoplasmic segment spans residues 1–10; it reads MTPRLGTMRL. The chain crosses the membrane as a helical; Signal-anchor for type II membrane protein span at residues 11-31; the sequence is ACMFSSILLFGAAGLLLFISL. Residues 32-417 are Lumenal-facing; the sequence is QDPIELSPQQ…NYSKPFSDLY (386 aa). Positions 47-101 are disordered; the sequence is FSIRPQQPQHDSHLRISTEKGTRDSPSGSPRGLQLQAPDQPRPHPKAAGSPLRLR. Residues 56–69 show a composition bias toward basic and acidic residues; the sequence is HDSHLRISTEKGTR. N-linked (GlcNAc...) asparagine glycans are attached at residues N121 and N122. Residues 191 to 197 and 251 to 259 each bind 3'-phosphoadenylyl sulfate; these read PKAGCSN and REPFERLVS. N287, N360, and N408 each carry an N-linked (GlcNAc...) asparagine glycan.

The protein belongs to the sulfotransferase 2 family. In terms of tissue distribution, strongly expressed in brain. Weakly expressed in lung and kidney. Weakly expressed in pituitary.

The protein resides in the golgi apparatus membrane. In terms of biological role, catalyzes the transfer of sulfate to position 4 of non-reducing N-acetylgalactosamine (GalNAc) residues in both N-glycans and O-glycans. Required for biosynthesis of glycoprotein hormones lutropin and thyrotropin, by mediating sulfation of their carbohydrate structures. Only active against terminal GalNAcbeta1,GalNAcbeta. Not active toward chondroitin. The polypeptide is Carbohydrate sulfotransferase 8 (Chst8) (Mus musculus (Mouse)).